A 1231-amino-acid chain; its full sequence is Protein FAM193A (1231 aa).

Residues 106–142 are a coiled coil; it reads CTEDMYSTLLQRYQRSEEELRKVAEEWLECQKRIDAY. The segment at 249–272 is disordered; sequence DYLSEMRPPSVSSASSGSGSSSPI. A compositionally biased stretch (low complexity) spans 258–270; sequence SVSSASSGSGSSS. A Phosphoserine modification is found at serine 293. Disordered regions lie at residues 331–405, 633–703, 719–789, 826–845, and 860–1174; these read NGGG…QAEQ, QSSS…APSF, SFCP…NQKE, LTKRKEEQPKKMEQISEREG, and NSSE…SSLD. Acidic residues predominate over residues 355-365; that stretch reads EADDEDADGES. Serine 648 carries the phosphoserine modification. Residues 676-691 are compositionally biased toward low complexity; that stretch reads LAPLPALSPSALSPAS. Positions 761 to 773 are enriched in acidic residues; it reads QQDDGDESADEDS. A compositionally biased stretch (low complexity) spans 776 to 785; that stretch reads EHSSSTSTST. The span at 872–881 shows a compositional bias: basic residues; the sequence is AAKRARHKQR. The stretch at 877–973 forms a coiled coil; the sequence is RHKQRKLEEK…ATESISNSEN (97 aa). Basic and acidic residues predominate over residues 882–909; that stretch reads KLEEKARLEAEARAREHLHHQEEQKQRE. A compositionally biased stretch (acidic residues) spans 910–920; sequence EEEDEEEEDEE. The span at 921 to 935 shows a compositional bias: basic and acidic residues; that stretch reads QHFKEEFQRLQELQK. Positions 937 to 946 are enriched in basic residues; the sequence is RAAKKKKKDR. Residues 962–979 show a composition bias toward polar residues; it reads QAATESISNSENIHNGSL. Serine 1136 and serine 1151 each carry phosphoserine. Residues 1156–1166 show a composition bias toward basic residues; that stretch reads GKNKKNKKKKG.

Belongs to the FAM193 family.

The protein is Protein FAM193A (Fam193a) of Mus musculus (Mouse).